Consider the following 290-residue polypeptide: 4-hydroxy-tetrahydrodipicolinate synthase (290 aa).

T44 lines the pyruvate pocket. The active-site Proton donor/acceptor is the Y132. K160 acts as the Schiff-base intermediate with substrate in catalysis. I202 lines the pyruvate pocket.

The protein belongs to the DapA family. As to quaternary structure, homotetramer; dimer of dimers.

It localises to the cytoplasm. The enzyme catalyses L-aspartate 4-semialdehyde + pyruvate = (2S,4S)-4-hydroxy-2,3,4,5-tetrahydrodipicolinate + H2O + H(+). It participates in amino-acid biosynthesis; L-lysine biosynthesis via DAP pathway; (S)-tetrahydrodipicolinate from L-aspartate: step 3/4. In terms of biological role, catalyzes the condensation of (S)-aspartate-beta-semialdehyde [(S)-ASA] and pyruvate to 4-hydroxy-tetrahydrodipicolinate (HTPA). This Citrifermentans bemidjiense (strain ATCC BAA-1014 / DSM 16622 / JCM 12645 / Bem) (Geobacter bemidjiensis) protein is 4-hydroxy-tetrahydrodipicolinate synthase.